A 117-amino-acid chain; its full sequence is Putative hydrolase fragment YghX (117 aa).

The segment at 91–117 (DGLSSVGGYPGNDDKGRELQQQVDPTN) is disordered.

The protein is Putative hydrolase fragment YghX (yghX) of Escherichia coli (strain K12).